We begin with the raw amino-acid sequence, 107 residues long: Replication initiation control protein YabA (107 aa).

4 residues coordinate Zn(2+): H81, C83, C97, and C100.

Belongs to the YabA family. As to quaternary structure, homotetramer. Interacts with both DnaA and DnaN, acting as a bridge between these two proteins. Zn(2+) serves as cofactor.

Its subcellular location is the cytoplasm. The protein localises to the nucleoid. In terms of biological role, involved in control of chromosome replication initiation. Inhibits the cooperative binding of DnaA to the oriC region, thus negatively regulating initiation of chromosome replication. Inhibits the ability of DnaA-ATP to form a helix on DNA; does not disassemble preformed DnaA-DNA helices. Decreases the residence time of DnaA on the chromosome at its binding sites (oriC, replication forks and promoter-binding sites). Tethers DnaA to the replication machinery via the DNA polymerase beta sliding clamp subunit (dnaN). Associates with oriC and other DnaA targets on the chromosome in a DnaA-dependent manner. In Streptococcus equi subsp. equi (strain 4047), this protein is Replication initiation control protein YabA.